The chain runs to 295 residues: Forkhead box protein N5 (295 aa).

Residues 119 to 146 (STVEDSEDEAPTSCSDLMTDDDNDDSYN) are disordered. Positions 178-275 (RPPLNYCNLI…NEMHALSDDL (98 aa)) form a DNA-binding region, fork-head.

In terms of tissue distribution, ubiquitously expressed in early cleavage stage and gastrula stage embryos.

It is found in the nucleus. This chain is Forkhead box protein N5, found in Xenopus laevis (African clawed frog).